The chain runs to 165 residues: Xanthine-guanine phosphoribosyltransferase (165 aa).

Residues 41–42 (RG) and 98–106 (DDLTDTGKT) each bind 5-phospho-alpha-D-ribose 1-diphosphate. A Mg(2+)-binding site is contributed by D99. Positions 102 and 145 each coordinate guanine. 2 residues coordinate xanthine: D102 and I145. GMP-binding positions include 102–106 (DTGKT) and 144–145 (WI).

This sequence belongs to the purine/pyrimidine phosphoribosyltransferase family. XGPT subfamily. In terms of assembly, homotetramer. The cofactor is Mg(2+).

It is found in the cell inner membrane. It catalyses the reaction GMP + diphosphate = guanine + 5-phospho-alpha-D-ribose 1-diphosphate. The enzyme catalyses XMP + diphosphate = xanthine + 5-phospho-alpha-D-ribose 1-diphosphate. It carries out the reaction IMP + diphosphate = hypoxanthine + 5-phospho-alpha-D-ribose 1-diphosphate. It functions in the pathway purine metabolism; GMP biosynthesis via salvage pathway; GMP from guanine: step 1/1. It participates in purine metabolism; XMP biosynthesis via salvage pathway; XMP from xanthine: step 1/1. Purine salvage pathway enzyme that catalyzes the transfer of the ribosyl-5-phosphate group from 5-phospho-alpha-D-ribose 1-diphosphate (PRPP) to the N9 position of the 6-oxopurines guanine and xanthine to form the corresponding ribonucleotides GMP (guanosine 5'-monophosphate) and XMP (xanthosine 5'-monophosphate), with the release of PPi. To a lesser extent, also acts on hypoxanthine. In Rhizobium meliloti (strain 1021) (Ensifer meliloti), this protein is Xanthine-guanine phosphoribosyltransferase.